The sequence spans 217 residues: 3,4-dihydroxy-2-butanone 4-phosphate synthase (217 aa).

D-ribulose 5-phosphate-binding positions include 37-38 (RE), Asp42, 150-154 (RQGHT), and Glu174. Glu38 is a Mg(2+) binding site. Residue His153 coordinates Mg(2+).

The protein belongs to the DHBP synthase family. In terms of assembly, homodimer. Mg(2+) serves as cofactor. It depends on Mn(2+) as a cofactor.

The catalysed reaction is D-ribulose 5-phosphate = (2S)-2-hydroxy-3-oxobutyl phosphate + formate + H(+). The protein operates within cofactor biosynthesis; riboflavin biosynthesis; 2-hydroxy-3-oxobutyl phosphate from D-ribulose 5-phosphate: step 1/1. Its function is as follows. Catalyzes the conversion of D-ribulose 5-phosphate to formate and 3,4-dihydroxy-2-butanone 4-phosphate. The sequence is that of 3,4-dihydroxy-2-butanone 4-phosphate synthase from Desulforamulus reducens (strain ATCC BAA-1160 / DSM 100696 / MI-1) (Desulfotomaculum reducens).